A 107-amino-acid polypeptide reads, in one-letter code: Replication restart protein PriB (107 aa).

Residues 8 to 107 (IENRLSLIGV…LHAEHIELLD (100 aa)) enclose the SSB domain.

It belongs to the PriB family. Homodimer. Interacts with PriA and DnaT. Component of the replication restart primosome. Primosome assembly occurs via a 'hand-off' mechanism. PriA binds to replication forks, subsequently PriB then DnaT bind; DnaT then displaces ssDNA to generate the helicase loading substrate.

Involved in the restart of stalled replication forks, which reloads the replicative helicase on sites other than the origin of replication; the PriA-PriB pathway is the major replication restart pathway. During primosome assembly it facilitates complex formation between PriA and DnaT on DNA; stabilizes PriA on DNA. Stimulates the DNA unwinding activity of PriA helicase. This is Replication restart protein PriB from Actinobacillus succinogenes (strain ATCC 55618 / DSM 22257 / CCUG 43843 / 130Z).